A 196-amino-acid chain; its full sequence is Dehydrogenase RED3 (196 aa).

6 residues coordinate NADP(+): serine 47, aspartate 74, asparagine 101, arginine 134, tyrosine 166, and lysine 170. Residue tyrosine 166 is the Proton acceptor of the active site. The active-site Lowers pKa of active site Tyr is the lysine 170.

It belongs to the short-chain dehydrogenases/reductases (SDR) family.

It carries out the reaction a primary alcohol + NAD(+) = an aldehyde + NADH + H(+). It catalyses the reaction a secondary alcohol + NAD(+) = a ketone + NADH + H(+). It functions in the pathway mycotoxin biosynthesis. In terms of biological role, dehydrogenase; part of the Tox1B locus, one of the 2 loci that mediate the biosynthesis of T-toxin, a family of linear polyketides 37 to 45 carbons in length, of which the major component is 41 carbons, and which leads to high virulence to maize. One of the PKSs (PKS1 or PKS2) could synthesize a precursor, used subsequently by the other PKS as starter unit, to add additional carbons. Variability in the length of the final carbon backbone C35-47 could be achieved by varying the number of condensation cycles, or use of different starter or extender units or might be due to decarboxylation of the penultimate product, catalyzed by DEC1. Additional proteins are required for the biosynthesis of T-toxin, including oxidoreductases RED1, RED2, RED3, LAM1 and OXI1, as well as esterase TOX9. The protein is Dehydrogenase RED3 of Cochliobolus heterostrophus (strain C4 / ATCC 48331 / race T) (Southern corn leaf blight fungus).